The chain runs to 507 residues: Protein zntA (507 aa).

The N-terminal stretch at 1 to 18 (MSIFAYSILAGLAPLLSS) is a signal peptide. Asparagine 31 is a glycosylation site (N-linked (GlcNAc...) asparagine). Residues 35–55 (FHILLCISAGLLFAVASLELI) traverse the membrane as a helical segment. The disordered stretch occupies residues 124-179 (GLNLNNLNQATNLDNNEEDNDNLDNDGENEIENDHDHDHQEDEGGDNDHDHESEEK). A compositionally biased stretch (low complexity) spans 125-137 (LNLNNLNQATNLD). A compositionally biased stretch (acidic residues) spans 138–154 (NNEEDNDNLDNDGENEI). Residues 155–179 (ENDHDHDHQEDEGGDNDHDHESEEK) are compositionally biased toward basic and acidic residues. A helical membrane pass occupies residues 185–205 (IPMYGIGFGFAILIIVESIFS). Residues 209–264 (GGGGGGGHHSHSHGSLSSSSSNDVISDYISNNNSNNINNNDDDNNNNNNNNDDDDD) are disordered. Over residues 221–258 (HGSLSSSSSNDVISDYISNNNSNNINNNDDDNNNNNNN) the composition is skewed to low complexity. N-linked (GlcNAc...) asparagine glycans are attached at residues asparagine 240, asparagine 298, asparagine 328, asparagine 342, and asparagine 351. A disordered region spans residues 305–350 (PNIASPVMNKDNNNNDKDKNRNSNKSDIKNSGSINNGNNSGNNNNN). Residues 317-332 (NNNDKDKNRNSNKSDI) are compositionally biased toward basic and acidic residues. Positions 333–350 (KNSGSINNGNNSGNNNNN) are enriched in low complexity. 5 consecutive transmembrane segments (helical) span residues 355-375 (LTIT…VVIS), 388-408 (VALA…SLIL), 422-442 (FFYF…SSFL), 451-471 (GAFV…TAIL), and 486-506 (LFSI…FHGA).

Belongs to the ZIP transporter (TC 2.A.5) family.

Its subcellular location is the membrane. Its function is as follows. May transport divalent cations. May participate, with dstA, in the regulation of the differentiation of stalk cells during development. This is Protein zntA (zntA) from Dictyostelium discoideum (Social amoeba).